The primary structure comprises 252 residues: Chitooligosaccharide deacetylase (252 aa).

Positions 61 and 125 each coordinate Mg(2+).

It belongs to the YdjC deacetylase family. ChbG subfamily. As to quaternary structure, homodimer. Mg(2+) serves as cofactor.

The protein localises to the cytoplasm. It catalyses the reaction N,N'-diacetylchitobiose + H2O = N-acetyl-beta-D-glucosaminyl-(1-&gt;4)-D-glucosamine + acetate. The catalysed reaction is diacetylchitobiose-6'-phosphate + H2O = N'-monoacetylchitobiose-6'-phosphate + acetate. It participates in glycan degradation; chitin degradation. Functionally, involved in the degradation of chitin. ChbG is essential for growth on the acetylated chitooligosaccharides chitobiose and chitotriose but is dispensable for growth on cellobiose and chitosan dimer, the deacetylated form of chitobiose. Deacetylation of chitobiose-6-P and chitotriose-6-P is necessary for both the activation of the chb promoter by the regulatory protein ChbR and the hydrolysis of phosphorylated beta-glucosides by the phospho-beta-glucosidase ChbF. Catalyzes the removal of only one acetyl group from chitobiose-6-P to yield monoacetylchitobiose-6-P, the inducer of ChbR and the substrate of ChbF. This is Chitooligosaccharide deacetylase from Salmonella paratyphi A (strain ATCC 9150 / SARB42).